The chain runs to 585 residues: Arginine--tRNA ligase (585 aa).

The short motif at 127–137 (PNTNKPLHVGH) is the 'HIGH' region element.

It belongs to the class-I aminoacyl-tRNA synthetase family. In terms of assembly, monomer.

The protein localises to the cytoplasm. The enzyme catalyses tRNA(Arg) + L-arginine + ATP = L-arginyl-tRNA(Arg) + AMP + diphosphate. The sequence is that of Arginine--tRNA ligase from Borrelia duttonii (strain Ly).